Reading from the N-terminus, the 276-residue chain is 2-hydroxy-6-oxo-2,4-heptadienoate hydrolase (276 aa).

One can recognise an AB hydrolase-1 domain in the interval 28–259 (NPVVLVHGSG…GRCGHWVQIE (232 aa)). Active-site residues include Ser105, Asp226, and His254.

This sequence belongs to the DmpD/TodF/XylF esterase family.

It catalyses the reaction (2Z,4E)-2-hydroxy-6-oxohepta-2,4-dienoate + H2O = (2Z)-2-hydroxypenta-2,4-dienoate + acetate + H(+). It functions in the pathway xenobiotic degradation; toluene degradation. Catalyzes the hydrolysis of 2-hydroxy-6-oxohepta-2,4-dienoate into 2-hydroxypenta-2,4-dienoate and acetate. The chain is 2-hydroxy-6-oxo-2,4-heptadienoate hydrolase (todF) from Pseudomonas putida (strain ATCC 700007 / DSM 6899 / JCM 31910 / BCRC 17059 / LMG 24140 / F1).